A 504-amino-acid polypeptide reads, in one-letter code: Deoxyguanosinetriphosphate triphosphohydrolase (504 aa).

The HD domain occupies 66–273 (RLTHSLEVQQ…MEAADDISYC (208 aa)).

Belongs to the dGTPase family. Type 1 subfamily. In terms of assembly, homotetramer. Mg(2+) serves as cofactor.

The catalysed reaction is dGTP + H2O = 2'-deoxyguanosine + triphosphate + H(+). In terms of biological role, dGTPase preferentially hydrolyzes dGTP over the other canonical NTPs. The protein is Deoxyguanosinetriphosphate triphosphohydrolase of Klebsiella pneumoniae (strain 342).